The primary structure comprises 60 residues: MAKKGNRIQVILECTEHKTSGVPGTSRYITTKNKKNTPDRLEIKKFNPILKRVTVHKEIK.

Belongs to the bacterial ribosomal protein bL33 family.

This chain is Large ribosomal subunit protein bL33, found in Flavobacterium johnsoniae (strain ATCC 17061 / DSM 2064 / JCM 8514 / BCRC 14874 / CCUG 350202 / NBRC 14942 / NCIMB 11054 / UW101) (Cytophaga johnsonae).